Consider the following 573-residue polypeptide: Potassium-transporting ATPase potassium-binding subunit (573 aa).

Helical transmembrane passes span 6-26 (ILFA…GSYI), 66-86 (FFSL…ILLL), 135-155 (ALAV…IALI), 177-197 (VFWI…FQGV), 257-277 (IQMV…GKWV), 283-303 (GWLI…VMTI), 382-402 (IFGG…LAVF), 428-448 (MFAL…AAVI), 493-513 (ITIA…VIML), and 537-557 (FIFA…TIFP).

The protein belongs to the KdpA family. As to quaternary structure, the system is composed of three essential subunits: KdpA, KdpB and KdpC.

It is found in the cell inner membrane. Its function is as follows. Part of the high-affinity ATP-driven potassium transport (or Kdp) system, which catalyzes the hydrolysis of ATP coupled with the electrogenic transport of potassium into the cytoplasm. This subunit binds the periplasmic potassium ions and delivers the ions to the membrane domain of KdpB through an intramembrane tunnel. The chain is Potassium-transporting ATPase potassium-binding subunit from Francisella tularensis subsp. holarctica (strain FTNF002-00 / FTA).